We begin with the raw amino-acid sequence, 147 residues long: Diaminohydroxyphosphoribosylamino-pyrimidine deaminase (147 aa).

The CMP/dCMP-type deaminase domain occupies 1–122; sequence MKDRFYMTRA…LYLRKKGISV (122 aa). Residue His-50 coordinates Zn(2+). Glu-52 serves as the catalytic Proton donor. Zn(2+)-binding residues include Cys-75 and Cys-84.

The protein belongs to the cytidine and deoxycytidylate deaminase family. Zn(2+) serves as cofactor.

The enzyme catalyses 2,5-diamino-6-hydroxy-4-(5-phosphoribosylamino)-pyrimidine + H2O + H(+) = 5-amino-6-(5-phospho-D-ribosylamino)uracil + NH4(+). It functions in the pathway cofactor biosynthesis; riboflavin biosynthesis; 5-amino-6-(D-ribitylamino)uracil from GTP: step 2/4. This is Diaminohydroxyphosphoribosylamino-pyrimidine deaminase (ribD1) from Buchnera aphidicola subsp. Schizaphis graminum (strain Sg).